The chain runs to 1191 residues: MERPLENGDESPDSQGHATDWRFAVCSFRDAWEEEEPASQMHVKDPGPPRPPAGATQDEELQGSPLSRKFQLPPAADESGDAQRGTVESSSVLSEGPGPSGVESLLCPMSSHLSLAQGESDTPGVGLVGDPGPSRAMPSGLSPGALDSDPVGLGDPLSEISKLLEAAPSGSGLPKPADCLLAQDLCWELLASGMATLPGTRDVQGRAVLLLCAHSPAWLQSECSSQELIRLLLYLRSIPRPEVQALGLTVLVDARICAPSSSLFSGLSQLQEAAPGAVYQVLLVGSTLLKEVPSGLQLEQLPSQSLLTHIPTAGLPTSLGGGLPYCHQAWLDFRRRLEALLQNCQAACALLQGAIESVKAVPQPMEPGEVGQLLQQTEVLMQQVLDSPWLAWLQCQGGRELTWLKQEVPEVTLSPDYRTAMDKADELYDRVDGLLHQLTLQSNQRIQALELVQTLEARESGLHQIEVWLQQVGWPALEEAGEPSLDMLLQAQGSFQELYQVAQEQVRQGEKFLQPLTGWEAAELDPPGARFLALRAQLTEFSRALAQRCQRLADAERLFQLFREALTWAEEGQRVLAELEQERPGVVLQQLQLHWTRHPDLPPAHFRKMWALATGLGSEAIRQECRWAWARCQDTWLALDQKLEASLKLPPVGSTASLCVSQVPAAPAHPPLRKAYSFDRNLGQSLSEPACHCHHAATIAACRRPEAGGGALPQASPTVPPPGSSDPRSLNRLQLVLAEMVATEREYVRALEYTMENYFPELDRPDVPQGLRGQRAHLFGNLEKLRDFHCHFFLRELEACTRHPPRVAYAFLRHRVQFGMYALYSKNKPRSDALMSSYGHTFFKDKQQALGDHLDLASYLLKPIQRMGKYALLLQELARACGGPTQELSALREAQSLVHFQLRHGNDLLAMDAIQGCDVNLKEQGQLVRQDEFVVRTGRHKSVRRIFLFEELLLFSKPRHGPTGVDTFAYKRSFKMADLGLTECCGNSNLRFEIWFRRRKARDTFVLQASSLAIKQAWTADISHLLWRQAVHNKEVRMAEMVSMGVGNKAFRDIAPSEEAINDRTVNYVLKCREVRSRASIAVAPFDHDSLYLGASNSLPGDPASCSVLGSLNLHLYRDPALLGLRCPLYPSFPEEAALEAEAELGGQPSLTAEDSEISSQCPSASGSSGSDSSCVSGQALGRGLEDLPCV.

Disordered regions lie at residues 1-152 and 707-728; these read MERP…DPVG and AGGG…SDPR. Ser-64 carries the phosphoserine modification. A compositionally biased stretch (polar residues) spans 111–120; sequence SHLSLAQGES. Positions 732-908 constitute a DH domain; that stretch reads RLQLVLAEMV…HFQLRHGNDL (177 aa). Positions 920 to 1027 constitute a PH domain; sequence NLKEQGQLVR…WTADISHLLW (108 aa). The interval 1150 to 1176 is disordered; that stretch reads SLTAEDSEISSQCPSASGSSGSDSSCV. The segment covering 1159-1176 has biased composition (low complexity); sequence SSQCPSASGSSGSDSSCV.

In terms of tissue distribution, expressed in kidney, Leydig cells in the testis, epithelial cells in the prostate gland and Langerhans islet in the pancreas. Isoform 1 and isoform 3 are strongly expressed in Purkinje cells and to a lower extent in other neurons (at protein level). Widely expressed at low levels. More strongly expressed in testis and pancreas.

In terms of biological role, possible role in intracellular signaling and cytoskeleton dynamics at the Golgi. The protein is Puratrophin-1 (PLEKHG4) of Homo sapiens (Human).